The chain runs to 189 residues: Movement protein (189 aa).

This sequence belongs to the tombusvirus/aureusvirus movement protein p22 family. Interacts with host protein HFI22. In terms of processing, phosphorylated.

It is found in the host membrane. Transports viral genome to neighboring plant cells directly through plasmosdesmata, without any budding. The movement protein allows efficient cell to cell propagation, by bypassing the host cell wall barrier. Displays RNA-binding activity. In Capsicum annuum (Capsicum pepper), this protein is Movement protein.